Reading from the N-terminus, the 392-residue chain is LL-diaminopimelate aminotransferase (392 aa).

The substrate site is built by Tyr-15, Gly-40, Lys-104, Tyr-128, and Asn-178. Residues 103-104 (SK), Tyr-128, Asn-178, Tyr-209, and 237-239 (SVS) contribute to the pyridoxal 5'-phosphate site. Lys-240 carries the post-translational modification N6-(pyridoxal phosphate)lysine. Arg-248 provides a ligand contact to pyridoxal 5'-phosphate. Arg-366 lines the substrate pocket.

The protein belongs to the class-I pyridoxal-phosphate-dependent aminotransferase family. LL-diaminopimelate aminotransferase subfamily. In terms of assembly, homodimer. It depends on pyridoxal 5'-phosphate as a cofactor.

The catalysed reaction is (2S,6S)-2,6-diaminopimelate + 2-oxoglutarate = (S)-2,3,4,5-tetrahydrodipicolinate + L-glutamate + H2O + H(+). It participates in amino-acid biosynthesis; L-lysine biosynthesis via DAP pathway; LL-2,6-diaminopimelate from (S)-tetrahydrodipicolinate (aminotransferase route): step 1/1. Involved in the synthesis of meso-diaminopimelate (m-DAP or DL-DAP), required for both lysine and peptidoglycan biosynthesis. Catalyzes the direct conversion of tetrahydrodipicolinate to LL-diaminopimelate. The polypeptide is LL-diaminopimelate aminotransferase (Desulforudis audaxviator (strain MP104C)).